The primary structure comprises 152 residues: Large ribosomal subunit protein uL15 (152 aa).

Positions 1-57 (MTSTLNTLKSNSGSRKKKLRKGRGIAAGQGASCGFGMRGQKSRSGRPTRPGFEGGQM) are disordered. Residues 14–23 (SRKKKLRKGR) are compositionally biased toward basic residues. Positions 25–37 (IAAGQGASCGFGM) are enriched in gly residues.

It belongs to the universal ribosomal protein uL15 family. Part of the 50S ribosomal subunit.

Functionally, binds to the 23S rRNA. This chain is Large ribosomal subunit protein uL15, found in Prochlorococcus marinus (strain MIT 9215).